The sequence spans 342 residues: Holliday junction branch migration complex subunit RuvB (342 aa).

The large ATPase domain (RuvB-L) stretch occupies residues 1 to 179 (MTNILSPEKS…FGIPMRLNFY (179 aa)). ATP-binding positions include Ile18, Arg19, Gly60, Lys63, Thr64, Thr65, 126-128 (EDF), Arg169, Tyr179, and Arg216. Residue Thr64 coordinates Mg(2+). Residues 180 to 250 (NTEELKKVLN…ISDFGLKRLE (71 aa)) form a small ATPAse domain (RuvB-S) region. The segment at 253 to 342 (RIGLDSNDYR…HQFNIFNENE (90 aa)) is head domain (RuvB-H). Arg289, Arg308, and Arg313 together coordinate DNA.

It belongs to the RuvB family. As to quaternary structure, homohexamer. Forms an RuvA(8)-RuvB(12)-Holliday junction (HJ) complex. HJ DNA is sandwiched between 2 RuvA tetramers; dsDNA enters through RuvA and exits via RuvB. An RuvB hexamer assembles on each DNA strand where it exits the tetramer. Each RuvB hexamer is contacted by two RuvA subunits (via domain III) on 2 adjacent RuvB subunits; this complex drives branch migration. In the full resolvosome a probable DNA-RuvA(4)-RuvB(12)-RuvC(2) complex forms which resolves the HJ.

The protein resides in the cytoplasm. The catalysed reaction is ATP + H2O = ADP + phosphate + H(+). Functionally, the RuvA-RuvB-RuvC complex processes Holliday junction (HJ) DNA during genetic recombination and DNA repair, while the RuvA-RuvB complex plays an important role in the rescue of blocked DNA replication forks via replication fork reversal (RFR). RuvA specifically binds to HJ cruciform DNA, conferring on it an open structure. The RuvB hexamer acts as an ATP-dependent pump, pulling dsDNA into and through the RuvAB complex. RuvB forms 2 homohexamers on either side of HJ DNA bound by 1 or 2 RuvA tetramers; 4 subunits per hexamer contact DNA at a time. Coordinated motions by a converter formed by DNA-disengaged RuvB subunits stimulates ATP hydrolysis and nucleotide exchange. Immobilization of the converter enables RuvB to convert the ATP-contained energy into a lever motion, pulling 2 nucleotides of DNA out of the RuvA tetramer per ATP hydrolyzed, thus driving DNA branch migration. The RuvB motors rotate together with the DNA substrate, which together with the progressing nucleotide cycle form the mechanistic basis for DNA recombination by continuous HJ branch migration. Branch migration allows RuvC to scan DNA until it finds its consensus sequence, where it cleaves and resolves cruciform DNA. This Rickettsia peacockii (strain Rustic) protein is Holliday junction branch migration complex subunit RuvB.